Reading from the N-terminus, the 404-residue chain is MAAFVRLLERLGWAARAQQVVEQEVEEECSVPGASGSLLAAPRCWQRLHRGAAATSGLRFGASAVQGWRARMEDAHCARLALPGLPSGWAFFAVLDGHGGARAARFGARHLPGYVLGELGPAPQEPDGVRQALRSAFLQADAQLSALWPRGDPGGSTAVALLVSPRFLYLAHCGDSRALLSRSGSVAFCTEDHRPHRPRERERIHDAGGTVRRRRVEGSLAVSRALGDFAYKQAPGRPPELQLVSAEPEVAALARQDEDEFVLLASDGVWDALSGADLAGLVTSRLRLGLDLELLCAQLLDTCLCKGSLDNMTCMVVCFPGAPRPCEEAISKEMALDEALSHKVAELYASAQEPPGLNTVFRTLASEDIPGLPPGGGLHSKAAVIAEAYSKLHQTPGECQEEEW.

Positions 59 to 319 (RFGASAVQGW…DNMTCMVVCF (261 aa)) constitute a PPM-type phosphatase domain. The Mn(2+) site is built by D96, G97, D267, and D310.

The protein belongs to the PP2C family. Mg(2+) serves as cofactor. Mn(2+) is required as a cofactor.

It carries out the reaction O-phospho-L-seryl-[protein] + H2O = L-seryl-[protein] + phosphate. The enzyme catalyses O-phospho-L-threonyl-[protein] + H2O = L-threonyl-[protein] + phosphate. The protein is Probable protein phosphatase 1N (Ppm1n) of Mus musculus (Mouse).